Consider the following 591-residue polypeptide: Protein kinase C zeta type (591 aa).

A PB1 domain is found at 15-98 (RVRLKAHYSG…DGLILHVFPS (84 aa)). The interval 79 to 145 (AFRLAGQHRD…KRFNRRAYCG (67 aa)) is interaction with SQSTM1. The Phorbol-ester/DAG-type zinc finger occupies 130-180 (GHLFQAKRFNRRAYCGQCSERIWGLARQGYRCINCKLLVHKRCHGLVPLTC). In terms of domain architecture, Protein kinase spans 251 to 517 (FDLIRVIGRG…FSDIKSHAFF (267 aa)). Residues 257-265 (IGRGSYAKV) and lysine 280 each bind ATP. Catalysis depends on aspartate 375, which acts as the Proton acceptor. A Phosphothreonine; by PDPK1 and PI3K modification is found at threonine 409. Positions 518–589 (RSIDWDLLEK…INPLLLSTEE (72 aa)) constitute an AGC-kinase C-terminal domain. Position 559 is a phosphothreonine (threonine 559). A Phosphoserine modification is found at serine 590.

Belongs to the protein kinase superfamily. AGC Ser/Thr protein kinase family. PKC subfamily. Interacts with PARD6A, PARD6B and PARD6G. Part of a complex with PARD3, PARD6A or PARD6B or PARD6G and CDC42 or RAC1. Interacts with ADAP1/CENTA1. Interacts directly with SQSTM1. Forms a ternary complex with SQSTM1 and KCNAB2. Forms another ternary complex with SQSTM1 and GABRR3. Forms a complex with SQSTM1 and MAP2K5. Interacts (via the protein kinase domain) with WWC1. Forms a tripartite complex with WWC1 and DDR1, but predominantly in the absence of collagen. Component of the Par polarity complex, composed of at least phosphorylated PRKCZ, PARD3 and TIAM1. Interacts with PDPK1 (via N-terminal region). Interacts with WDFY2 (via WD repeats 1-3). Interacts with VAMP2. Forms a complex with WDFY2 and VAMP2. Interacts with APPL1. Interacts with WWC1, WWC2 and WWC3. CDH5 is required for its phosphorylation at Thr-409. Phosphorylated by protein kinase PDPK1; phosphorylation is inhibited by the apoptotic C-terminal cleavage product of PKN2. Phosphorylation at Thr-409 by PI3K activates the kinase.

Its subcellular location is the cytoplasm. The protein resides in the endosome. It is found in the cell junction. The protein localises to the membrane. It carries out the reaction L-seryl-[protein] + ATP = O-phospho-L-seryl-[protein] + ADP + H(+). It catalyses the reaction L-threonyl-[protein] + ATP = O-phospho-L-threonyl-[protein] + ADP + H(+). Atypical PKCs (PRKCI and PRKCZ) exhibit an elevated basal enzymatic activity (that may be due to the interaction with SMG1 or SQSTM1) and are not regulated by diacylglycerol, phosphatidylserine, phorbol esters or calcium ions. Two specific sites, Thr-409 (activation loop of the kinase domain) and Thr-559 (turn motif), need to be phosphorylated for its full activation. Phosphatidylinositol 3,4,5-trisphosphate might be a physiological activator. Its function is as follows. Calcium- and diacylglycerol-independent serine/threonine-protein kinase that functions in phosphatidylinositol 3-kinase (PI3K) pathway and mitogen-activated protein (MAP) kinase cascade, and is involved in NF-kappa-B activation, mitogenic signaling, cell proliferation, cell polarity, inflammatory response and maintenance of long-term potentiation (LTP). Upon lipopolysaccharide (LPS) treatment in macrophages, or following mitogenic stimuli, functions downstream of PI3K to activate MAP2K1/MEK1-MAPK1/ERK2 signaling cascade independently of RAF1 activation. Required for insulin-dependent activation of AKT3, but may function as an adapter rather than a direct activator. Upon insulin treatment may act as a downstream effector of PI3K and contribute to the activation of translocation of the glucose transporter SLC2A4/GLUT4 and subsequent glucose transport in adipocytes. In EGF-induced cells, binds and activates MAP2K5/MEK5-MAPK7/ERK5 independently of its kinase activity and can activate JUN promoter through MEF2C. Through binding with SQSTM1/p62, functions in interleukin-1 signaling and activation of NF-kappa-B with the specific adapters RIPK1 and TRAF6. Participates in TNF-dependent transactivation of NF-kappa-B by phosphorylating and activating IKBKB kinase, which in turn leads to the degradation of NF-kappa-B inhibitors. In migrating astrocytes, forms a cytoplasmic complex with PARD6A and is recruited by CDC42 to function in the establishment of cell polarity along with the microtubule motor and dynein. In association with FEZ1, stimulates neuronal differentiation in PC12 cells. In the inflammatory response, is required for the T-helper 2 (Th2) differentiation process, including interleukin production, efficient activation of JAK1 and the subsequent phosphorylation and nuclear translocation of STAT6. May be involved in development of allergic airway inflammation (asthma), a process dependent on Th2 immune response. In the NF-kappa-B-mediated inflammatory response, can relieve SETD6-dependent repression of NF-kappa-B target genes by phosphorylating the RELA subunit at 'Ser-311'. Phosphorylates VAMP2 in vitro. Phosphorylates and activates LRRK1, which phosphorylates RAB proteins involved in intracellular trafficking. This chain is Protein kinase C zeta type (PRKCZ), found in Oryctolagus cuniculus (Rabbit).